The primary structure comprises 89 residues: Arminin 7519 (89 aa).

An N-terminal signal peptide occupies residues 1-18 (MRSTFAVLFLALIALTYS). The propeptide occupies 19–59 (KNYQDVKEEIKNEVENEILRDLGEDDDELDDNAQEAVNDAR). Alanine 86 is subject to Alanine amide.

The protein belongs to the arminin family. Expressed in entodermal epithelium along the body column.

Its subcellular location is the secreted. It is found in the target cell membrane. Its function is as follows. Antimicrobial peptide with a broad-spectrum antimicrobial activity. Keeps its antibacterial activity under a wide range of salt concentrations that mimic physiological conditions of human blood, which is surprising, since Hydra is an obligate freshwater animal with nearly no salt tolerance. Does not affect red blood cells. This Hydra vulgaris (Hydra) protein is Arminin 7519.